The sequence spans 244 residues: UPF0246 protein FMG_1068 (244 aa).

The protein belongs to the UPF0246 family.

In Finegoldia magna (strain ATCC 29328 / DSM 20472 / WAL 2508) (Peptostreptococcus magnus), this protein is UPF0246 protein FMG_1068.